A 263-amino-acid polypeptide reads, in one-letter code: Small ribosomal subunit protein eS1 (263 aa).

The disordered stretch occupies residues 235 to 263; it reads HGEGGGGKGEAGDKSERPEGYEPPVQESV. Residues 244–254 are compositionally biased toward basic and acidic residues; that stretch reads EAGDKSERPEG.

The protein belongs to the eukaryotic ribosomal protein eS1 family. In terms of assembly, component of the small ribosomal subunit. Mature ribosomes consist of a small (40S) and a large (60S) subunit. The 40S subunit contains about 33 different proteins and 1 molecule of RNA (18S). The 60S subunit contains about 49 different proteins and 3 molecules of RNA (28S, 5.8S and 5S).

The protein localises to the cytoplasm. This chain is Small ribosomal subunit protein eS1, found in Bombyx mori (Silk moth).